Reading from the N-terminus, the 273-residue chain is Ribosomal RNA small subunit methyltransferase A (273 aa).

6 residues coordinate S-adenosyl-L-methionine: Asn18, Leu20, Gly45, Glu66, Asp91, and Asn113.

This sequence belongs to the class I-like SAM-binding methyltransferase superfamily. rRNA adenine N(6)-methyltransferase family. RsmA subfamily.

It localises to the cytoplasm. It catalyses the reaction adenosine(1518)/adenosine(1519) in 16S rRNA + 4 S-adenosyl-L-methionine = N(6)-dimethyladenosine(1518)/N(6)-dimethyladenosine(1519) in 16S rRNA + 4 S-adenosyl-L-homocysteine + 4 H(+). Its function is as follows. Specifically dimethylates two adjacent adenosines (A1518 and A1519) in the loop of a conserved hairpin near the 3'-end of 16S rRNA in the 30S particle. May play a critical role in biogenesis of 30S subunits. This Salmonella typhimurium (strain LT2 / SGSC1412 / ATCC 700720) protein is Ribosomal RNA small subunit methyltransferase A.